The sequence spans 310 residues: ADP-L-glycero-D-manno-heptose-6-epimerase (310 aa).

Residues 10–11 (FI), 31–32 (DN), Lys38, Lys53, 75–79 (EGACS), and Asn92 each bind NADP(+). Tyr140 functions as the Proton acceptor in the catalytic mechanism. NADP(+) is bound at residue Lys144. Asn169 lines the substrate pocket. NADP(+)-binding residues include Val170 and Lys178. The active-site Proton acceptor is Lys178. Substrate is bound by residues Gly180, His187, 201–204 (FAGS), Arg209, and Tyr272.

Belongs to the NAD(P)-dependent epimerase/dehydratase family. HldD subfamily. Homopentamer. NADP(+) serves as cofactor.

The catalysed reaction is ADP-D-glycero-beta-D-manno-heptose = ADP-L-glycero-beta-D-manno-heptose. It functions in the pathway nucleotide-sugar biosynthesis; ADP-L-glycero-beta-D-manno-heptose biosynthesis; ADP-L-glycero-beta-D-manno-heptose from D-glycero-beta-D-manno-heptose 7-phosphate: step 4/4. Functionally, catalyzes the interconversion between ADP-D-glycero-beta-D-manno-heptose and ADP-L-glycero-beta-D-manno-heptose via an epimerization at carbon 6 of the heptose. The polypeptide is ADP-L-glycero-D-manno-heptose-6-epimerase (Sodalis glossinidius (strain morsitans)).